A 496-amino-acid polypeptide reads, in one-letter code: D-2-hydroxyglutarate--pyruvate transhydrogenase DLD3 (496 aa).

Lys-17 is covalently cross-linked (Glycyl lysine isopeptide (Lys-Gly) (interchain with G-Cter in ubiquitin)). In terms of domain architecture, FAD-binding PCMH-type spans 64 to 243; that stretch reads YRGQSNLILL…TGVSIVAAAK (180 aa).

Belongs to the FAD-binding oxidoreductase/transferase type 4 family. The cofactor is FAD.

It is found in the cytoplasm. The enzyme catalyses (R)-lactate + 2 Fe(III)-[cytochrome c] = 2 Fe(II)-[cytochrome c] + pyruvate + 2 H(+). It carries out the reaction (R)-2-hydroxyglutarate + pyruvate = (R)-lactate + 2-oxoglutarate. Functionally, catalyzes the reversible oxidation of (R)-2-hydroxyglutarate to 2-oxoglutarate coupled to reduction of pyruvate to (R)-lactate. Can also use oxaloacetate as electron acceptor instead of pyruvate producing (R)-malate. The sequence is that of D-2-hydroxyglutarate--pyruvate transhydrogenase DLD3 (DLD3) from Saccharomyces cerevisiae (strain ATCC 204508 / S288c) (Baker's yeast).